The following is a 29-amino-acid chain: Galanin (29 aa).

The residue at position 29 (Ala-29) is an Alanine amide.

The protein belongs to the galanin family.

The protein resides in the secreted. Its function is as follows. Contracts smooth muscle of the gastrointestinal and genitourinary tract, regulates growth hormone release, modulates insulin release, and may be involved in the control of adrenal secretion. This is Galanin (GAL) from Ovis aries (Sheep).